Here is a 550-residue protein sequence, read N- to C-terminus: Arginine--tRNA ligase (550 aa).

The 'HIGH' region motif lies at 124–134; it reads ANPTGPLHVGH.

Belongs to the class-I aminoacyl-tRNA synthetase family. In terms of assembly, monomer.

The protein resides in the cytoplasm. It carries out the reaction tRNA(Arg) + L-arginine + ATP = L-arginyl-tRNA(Arg) + AMP + diphosphate. The chain is Arginine--tRNA ligase from Desulfovibrio desulfuricans (strain ATCC 27774 / DSM 6949 / MB).